The sequence spans 238 residues: Arginine ABC transporter permease protein ArtQ (238 aa).

At Met-1 to Thr-14 the chain is on the periplasmic side. One can recognise an ABC transmembrane type-1 domain in the interval Ala-11 to Leu-223. Residues Val-15 to Trp-35 traverse the membrane as a helical segment. Over Glu-36–Ser-48 the chain is Cytoplasmic. A helical membrane pass occupies residues Ala-49–Gly-69. Topologically, residues Ser-70–Asn-98 are periplasmic. A helical membrane pass occupies residues Phe-99–Ala-119. At Ser-120–Gln-168 the chain is on the cytoplasmic side. The helical transmembrane segment at Trp-169–Leu-189 threads the bilayer. Over Gln-190 to Pro-201 the chain is Periplasmic. A helical transmembrane segment spans residues Phe-202–Ile-222. The Cytoplasmic segment spans residues Leu-223–Ser-238.

The protein belongs to the binding-protein-dependent transport system permease family. HisMQ subfamily. As to quaternary structure, the complex is composed of two ATP-binding proteins (ArtP), two transmembrane proteins (ArtM and ArtQ) and two solute-binding proteins (ArtJ and ArtI).

It localises to the cell inner membrane. Its function is as follows. Part of the ABC transporter complex ArtPIQMJ involved in arginine transport. Probably responsible for the translocation of the substrate across the membrane. The polypeptide is Arginine ABC transporter permease protein ArtQ (artQ) (Escherichia coli O6:H1 (strain CFT073 / ATCC 700928 / UPEC)).